The chain runs to 109 residues: Sperm-specific class P protein 19 (109 aa).

Residues 1-109 (MSLTADPPAC…TVTIPMSATA (109 aa)) enclose the MSP domain.

Monomer. Expressed at higher level in testis.

This Caenorhabditis elegans protein is Sperm-specific class P protein 19 (ssp-19).